The primary structure comprises 157 residues: S-ribosylhomocysteine lyase (157 aa).

The Fe cation site is built by His54, His58, and Cys124.

It belongs to the LuxS family. In terms of assembly, homodimer. Fe cation is required as a cofactor.

It carries out the reaction S-(5-deoxy-D-ribos-5-yl)-L-homocysteine = (S)-4,5-dihydroxypentane-2,3-dione + L-homocysteine. In terms of biological role, involved in the synthesis of autoinducer 2 (AI-2) which is secreted by bacteria and is used to communicate both the cell density and the metabolic potential of the environment. The regulation of gene expression in response to changes in cell density is called quorum sensing. Catalyzes the transformation of S-ribosylhomocysteine (RHC) to homocysteine (HC) and 4,5-dihydroxy-2,3-pentadione (DPD). The sequence is that of S-ribosylhomocysteine lyase from Lacticaseibacillus paracasei (strain ATCC 334 / BCRC 17002 / CCUG 31169 / CIP 107868 / KCTC 3260 / NRRL B-441) (Lactobacillus paracasei).